The primary structure comprises 227 residues: Hydroxylase/desaturase asaB (227 aa).

Belongs to the asaB hydroxylase/desaturase family.

Its pathway is secondary metabolite biosynthesis. Its function is as follows. Hydroxylase/desaturase; part of the gene cluster that mediates the biosynthesis of aspergillic acid, a hydroxamic acid-containing pyrazinone with aliphatic side chains that originates from leucine (Leu) and isoleucine (Ile). Aspergillic acid has antibiotic properties and was shown to be lethal to mice. The first step in the pathway is the production of deoxyaspergillic acid via a condensation between the Ile amine and the Leu carboxylic acid, followed by a reductive release from the protein forming the dipeptide aldehyde NH(2)-Leu-Ile-CHO, which could undergo an intermolecular cyclization resulting in a dihydropyrazinone. As the NRPS asaC lacks a condensation domain, it is improbable that it is responsible for condensation of Leu and Ile. One possibility is that asaC acts on a previously condensed dipeptide and functions as a Leu-Ile reductase to yield deoxyaspergillic acid. After asaC forms deoxyaspergillic acid, the cytochrome P450 asaD oxidizes the pyrazinone to the hydroxamic acid-containing bioactive metabolite aspergillic acid. The hydroxylase/desaturase asaB can then convert aspergillic acid to hydroxyaspergillic acid. Both aspergillic acid and hydroxyaspergillic acid can form complexes with iron producing ferriaspergillin analogs. The sequence is that of Hydroxylase/desaturase asaB from Aspergillus flavus (strain ATCC 200026 / FGSC A1120 / IAM 13836 / NRRL 3357 / JCM 12722 / SRRC 167).